We begin with the raw amino-acid sequence, 734 residues long: ABC transporter D family member 1 (734 aa).

The next 4 helical transmembrane spans lie at 52 to 72 (IIKI…ILFG), 112 to 132 (FAIG…SIMA), 177 to 197 (FTTL…VVVY), and 204 to 224 (TTID…GYLI). The 289-residue stretch at 63–351 (PLTLFLILFG…VEEEQAKIQF (289 aa)) folds into the ABC transmembrane type-1 domain. Over residues 271–286 (HPEKRFDNNDYDHGYE) the composition is skewed to basic and acidic residues. Positions 271 to 296 (HPEKRFDNNDYDHGYESDDSDQSCDE) are disordered. Positions 332–359 (DSNDQKEELLVEEEQAKIQFEALLKNKK) form a coiled coil. Residues 374–394 (LFTYLSPIANYFIIAIPVFFL) traverse the membrane as a helical segment. One can recognise an ABC transporter domain in the interval 492–729 (ITLDDVTYFT…NNNNTNKIAE (238 aa)). Residue 525 to 532 (GPSGSGKS) coordinates ATP. A compositionally biased stretch (low complexity) spans 712 to 725 (QSNNINNNNNNNTN). A disordered region spans residues 712 to 734 (QSNNINNNNNNNTNKIAEDSVFD).

It belongs to the ABC transporter superfamily. ABCD family. Peroxisomal fatty acyl CoA transporter (TC 3.A.1.203) subfamily.

It is found in the membrane. The enzyme catalyses (9Z)-octadecenoyl-CoA(in) = (9Z)-octadecenoyl-CoA(out). This is ABC transporter D family member 1 (abcD1) from Dictyostelium discoideum (Social amoeba).